The sequence spans 317 residues: Aspartate carbamoyltransferase catalytic subunit (317 aa).

Residues arginine 66 and threonine 67 each coordinate carbamoyl phosphate. Lysine 94 serves as a coordination point for L-aspartate. Carbamoyl phosphate is bound by residues arginine 116, histidine 144, and glutamine 147. Residues arginine 177 and arginine 231 each contribute to the L-aspartate site. Positions 272 and 273 each coordinate carbamoyl phosphate.

Belongs to the aspartate/ornithine carbamoyltransferase superfamily. ATCase family. Heterododecamer (2C3:3R2) of six catalytic PyrB chains organized as two trimers (C3), and six regulatory PyrI chains organized as three dimers (R2).

The catalysed reaction is carbamoyl phosphate + L-aspartate = N-carbamoyl-L-aspartate + phosphate + H(+). It functions in the pathway pyrimidine metabolism; UMP biosynthesis via de novo pathway; (S)-dihydroorotate from bicarbonate: step 2/3. Functionally, catalyzes the condensation of carbamoyl phosphate and aspartate to form carbamoyl aspartate and inorganic phosphate, the committed step in the de novo pyrimidine nucleotide biosynthesis pathway. The chain is Aspartate carbamoyltransferase catalytic subunit from Beijerinckia indica subsp. indica (strain ATCC 9039 / DSM 1715 / NCIMB 8712).